Consider the following 2641-residue polypeptide: MHSTSGLAPVFRVEENHMIRNRENLERPISKKGTITLLSKMPMGFVLNSCSCAYIDNLLAHSSIHRVKPHSFMIQRLVVICGRSSPSLPNHAANIILSAFNFCQIEAPAKKFLEEDAALSLFHTILSYSTVTQINRSGIEILGAQRLTSALCDLIYAYTKTMDDMVASKTLTHLCKKLAGLFDPLVVLPFISKLAKSRRLRHYLQPLFLGHCEYTSDTWGVSPEGAEIYNQIARGNFTTQTLIEIVQTFLEKEVKEVIISSTTDPIKLVQYLISCSNPDNTEIVQALAFLLYSNTKLLPAGSGGTIDMDVQAADTITTARLGDTKFTQPVKDALLDSGREALLRRMEIYGVSLLSSVENFVTELKQAPIQKKMVTNNSVANAILYMLQYNFDMSRDIENGRQDNSPFWGGSNFVIGITRFVEEQQAAVRDMEGFSDWYPDINWVEVIKEFDSEEFAICRQTIIMFADIFPIMFQPQNFPVSFFLTPWRYYDHQLRLFEFMIEYADVWNISQYPHTKVLTPDLNLKTIPDDSTSVVQLWNCQEFSNCLLTIANSQPSLYNAIKQFYNVGSMQAGDVSMLALILSPTQWTTGRQDLIRHFLPSFILKSPNVTPVLNLVWNDTSLSKHMRQHVIYCLTSMHAADSSQLAKILDVAHDIKPTGLSELLNQAPKHLAFMVDLACLASKRDYLNLEKWIEDKEKAHGEAMTVAVLQFIQKKYQHAQLVAAIAPKTQATTPGAPSEPLQVLIPFVSKRARKPLRQQFPLVFQVMKENSGRSSSVSSGGHVQQSSGSQPQQQQFGGGSGLPPSGVVPVQQQPQQPPSLQQQHSQQSLPTPPTTSQQQIHVQQSVPGPIQRPAQFAPQPMFPPQAQAQHQHQHMMGQPPPSSQNAQPGMNLLMNMSPFASGNNRDLLKVVQPAPPPPSSMSPSTQMMRSLIPPLTQRQNSNSGWHAAPAPQRPSGPPTPQQQMDFRGQIQEFAPQGPHQLQRSGSVTGRSMGIVGQKTSSNFSVGAPIPGSAAATAAAAANVQQPMNEDFQSMTFAEDIQEEANSYFEKIYSVNNAMSVENLIDLLKRFRVSNDRRERLVLACVVKNLFEEYRFFHEYPERELRTTAAVYGGIIREDIISNVQFATAVRKVIESLSADPNTMLWTFGIVALQHCRSKLCAYPKVCQMIVSSENFARFPQLLKDYVIAGVKGELPPEGGRHTPVGSAQAGSASSTPTPAAAPTNWGAVARAASVDPKNSLPANRTGNVLSYTNVDTLVMATNKDGAEIAQPAEAIVDKISFLFNNLSQSNLIQKKDEVVEMISDHGDAFTLWLAQYIVMKRVSIEQNFQPLYNQFVNAIENPYLDQCIKRETFRNIRILLRTDKRTTVASNYSDRQLLKNLGSWLGAITIARNKPILLNDLDLKSLLLEAYYKGQAELLYVVPFISKILTACSKTSLFTPTCAWIRSILKVLAELHNEPDLKINLKFEIEVLCKELNVDLNQLQMDGILKDTEKLVRVPQQLCDVKLLTRPEAASPVQSKIHMSGSAEQLSGMSPAIPDQVKPATPQPTEAELQSGTGGGGSQGAEAQVVPNVTHFAYHDINVLTYDGLIPHVKIVSHLPLFQLHPHAKHLVRPAMIHAIKELIGPVTERALKIAMTVTESLVRKDFALDPEEQNLRAASFHMMRAMTAGMAMITCRDPLASSMHSNLANAFSSSLRSTAANPEMKQMIEDAAATITQDNVELSTNFIVKTACEKATQDIEKRLEADYQKRIAAKAEMSFYRDEIAAAIHAQLPKAIATVPGPTDKALMGIYDQFSSRICGFKANSGEDPVSAEPGSGAITPVQTQSKEMELVCQQLQVIIKEVDQTTQAQPHLSNSAFQTVCLMRELMQNVISTKDANHLMILVTRSTEHLLHAYRLEGTPPKNLLDVEWARRLRDLFIGLMRLLQNYFPLVELSRRITTAIMQIRSDYKWNMEGIEILFKQNLLQSVLWDQHLAGSMDNGGNMEAVLFAQKFVRSIGGGDMSRIQFLKERFPLTCEQLTKLHQLQSATRTEGMNNAMNNGAGNAAHHHAGLQQQPPVALPMEAAPMPQASADAMAQRGYDDQEMTAKVEIIMREWIGLCYSPTGQRSPQESLAQMIQLMHEHGVLATDDKITQFFRLCVENCVDISVRVMKSEQLANGLPTTLIRHRCYYTLDAFVKLMALMIRHSDNGQSQNKINLLKKLLNIIVGVLHMDHEVRKQDFNAMPYHRILISLFNEITGPDPLKLLEPIAWSILEAFGQTFFALQPRRMPGFAFAWLDIVGHRNVIGRLLANTGIAETVDAVKTAATYTQLIISHLKFLAPFLRNIQLPKSIAILYKGTLRVLLVILHDFPELLCEFHYVICDTIPPNCVQLRNLILSAYPRQMRLPDPFALNFKQVDTIPEMAVEPKSNLNMATIIPDNIRIPLDEYLANRISVDFLPNLPTLLQTQNQAGTKYNTTVMNALVLYVGIRAIEHLHLRRQRISTLNIAHTSYMDIFQNLAIQLDTEGRYLLFNGIANQLRYPNAHTHYFSCVFLYLFKNSTNDTIQEQITRILFERLVALRPHPWGLLITFIELIKNPTYNFWRYEFTSCAPEIQRLFQNVANTCVPAQGSQPQAQPDGAPGPLGNNTGAANQQQNPNTN.

Residues 660 to 664 (LSELL) carry the LXXLL motif. Disordered stretches follow at residues 771 to 887 (SGRS…QNAQ), 936 to 963 (TQRQ…PQQQ), 1197 to 1221 (EGGR…PAAA), 1518 to 1565 (QSKI…SQGA), and 2034 to 2054 (GMNN…AGLQ). 3 stretches are compositionally biased toward low complexity: residues 774–795 (SSSV…QQQQ), 802–839 (LPPS…SQQQ), and 853–877 (PAQF…HMMG). Positions 951–960 (PQRPSGPPTP) are enriched in pro residues. Residues 1205–1221 (GSAQAGSASSTPTPAAA) show a composition bias toward low complexity. Positions 2034–2046 (GMNNAMNNGAGNA) are enriched in low complexity. The short motif at 2341 to 2345 (LRVLL) is the LXXLL element. Residues 2609–2641 (AQGSQPQAQPDGAPGPLGNNTGAANQQQNPNTN) are disordered.

The protein belongs to the CNOT1 family. Component of the CCR4-NOT complex at least composed of ccf-1, ccr-4 and let-711, which is required for germ cell development in hermaphrodites. Within the complex interacts with ccf-1 and ccr-4; the interactions are direct. As to expression, highly expressed in the germline of hermaphrodites.

Its subcellular location is the nucleus. Functionally, scaffolding component of the CCR4-NOT complex which is one of the major cellular mRNA deadenylases and is linked to various cellular processes including bulk mRNA degradation, miRNA-mediated repression, translational repression during translational initiation and general transcription regulation. Positively regulates the accumulation of the CCR4-NOT complex component ccr-1. Within the complex promotes germ cell development and fertility in hermaphrodites. Additional complex functions may be a consequence of its influence on mRNA expression. Its scaffolding function implies its interaction with the catalytic complex module and diverse RNA-binding proteins mediating the complex recruitment to selected mRNA 3'UTRs. Mediates the recruitment of the CCR4-NOT complex to miRNA targets and to the RISC complex. Acts as a transcriptional repressor. Represses the ligand-dependent transcriptional activation by nuclear receptors. In embryos, plays a role in female pronucleus and mitotic spindle positioning during the first cleavage divisions after fertilization. This may partly be through negatively regulating the accumulation of zyg-9 at the centrosome. Negatively regulates the formation of long astral microtubules in developing embryos. Required for the stabilization and degradation of maternal mRNAs such as nos-2 in somatic blastomeres. In Caenorhabditis elegans, this protein is CCR4-NOT transcription complex subunit let-711.